We begin with the raw amino-acid sequence, 487 residues long: NADH-quinone oxidoreductase subunit N (487 aa).

14 consecutive transmembrane segments (helical) span residues valine 16–phenylalanine 36, leucine 45–glycine 65, asparagine 79–serine 99, glycine 111–threonine 131, leucine 133–phenylalanine 153, phenylalanine 168–valine 188, leucine 212–phenylalanine 232, alanine 257–alanine 276, leucine 281–leucine 298, methionine 306–threonine 326, isoleucine 333–leucine 353, alanine 378–isoleucine 398, isoleucine 413–valine 435, and leucine 457–leucine 477.

This sequence belongs to the complex I subunit 2 family. In terms of assembly, NDH-1 is composed of 14 different subunits. Subunits NuoA, H, J, K, L, M, N constitute the membrane sector of the complex.

The protein resides in the cell inner membrane. The catalysed reaction is a quinone + NADH + 5 H(+)(in) = a quinol + NAD(+) + 4 H(+)(out). Its function is as follows. NDH-1 shuttles electrons from NADH, via FMN and iron-sulfur (Fe-S) centers, to quinones in the respiratory chain. The immediate electron acceptor for the enzyme in this species is believed to be ubiquinone. Couples the redox reaction to proton translocation (for every two electrons transferred, four hydrogen ions are translocated across the cytoplasmic membrane), and thus conserves the redox energy in a proton gradient. This is NADH-quinone oxidoreductase subunit N from Trichlorobacter lovleyi (strain ATCC BAA-1151 / DSM 17278 / SZ) (Geobacter lovleyi).